The following is a 292-amino-acid chain: Pyridoxal 5'-phosphate synthase subunit PdxS (292 aa).

Residue D22 coordinates D-ribose 5-phosphate. The active-site Schiff-base intermediate with D-ribose 5-phosphate is K79. G151 contributes to the D-ribose 5-phosphate binding site. R163 is a D-glyceraldehyde 3-phosphate binding site. Residues G212 and 233–234 (GS) each bind D-ribose 5-phosphate.

The protein belongs to the PdxS/SNZ family. As to quaternary structure, in the presence of PdxT, forms a dodecamer of heterodimers.

The enzyme catalyses aldehydo-D-ribose 5-phosphate + D-glyceraldehyde 3-phosphate + L-glutamine = pyridoxal 5'-phosphate + L-glutamate + phosphate + 3 H2O + H(+). Its pathway is cofactor biosynthesis; pyridoxal 5'-phosphate biosynthesis. In terms of biological role, catalyzes the formation of pyridoxal 5'-phosphate from ribose 5-phosphate (RBP), glyceraldehyde 3-phosphate (G3P) and ammonia. The ammonia is provided by the PdxT subunit. Can also use ribulose 5-phosphate and dihydroxyacetone phosphate as substrates, resulting from enzyme-catalyzed isomerization of RBP and G3P, respectively. The polypeptide is Pyridoxal 5'-phosphate synthase subunit PdxS (Thermoanaerobacter sp. (strain X514)).